A 284-amino-acid chain; its full sequence is Avenin-like b4 (284 aa).

The signal sequence occupies residues 1–18 (MKVFILALLALTATTAIA).

It belongs to the prolamin family. In terms of processing, contains disulfide bonds.

Functionally, seed storage protein. Might be integrated via inter-chain disulfide bonds within the glutenin polymer. The protein is Avenin-like b4 of Triticum aestivum (Wheat).